Consider the following 899-residue polypeptide: Probable disease resistance protein RXW24L (899 aa).

Residues 13-50 (DRLSQEYDQFKGVEDQVTELKSNLNLLKSFLKDADAKK) are a coiled coil. The region spanning 143–455 (LQERQREMRH…AEGISERRRY (313 aa)) is the NB-ARC domain. 189-196 (GMGGLGKT) contributes to the ATP binding site.

It belongs to the disease resistance NB-LRR family.

Its function is as follows. Potential disease resistance protein. The polypeptide is Probable disease resistance protein RXW24L (RXW24L) (Arabidopsis thaliana (Mouse-ear cress)).